The chain runs to 436 residues: Histidine--tRNA ligase 1 (436 aa).

It belongs to the class-II aminoacyl-tRNA synthetase family. In terms of assembly, homodimer.

The protein resides in the cytoplasm. The catalysed reaction is tRNA(His) + L-histidine + ATP = L-histidyl-tRNA(His) + AMP + diphosphate + H(+). This is Histidine--tRNA ligase 1 from Bacillus cereus (strain ATCC 10987 / NRS 248).